Reading from the N-terminus, the 106-residue chain is Met repressor (106 aa).

Belongs to the MetJ family. Homodimer.

It localises to the cytoplasm. Functionally, this regulatory protein, when combined with SAM (S-adenosylmethionine) represses the expression of the methionine regulon and of enzymes involved in SAM synthesis. This is Met repressor from Vibrio campbellii (strain ATCC BAA-1116).